The chain runs to 429 residues: Serine--tRNA ligase (429 aa).

235–237 (TAE) provides a ligand contact to L-serine. ATP is bound at residue 266–268 (RSE). Glu-289 provides a ligand contact to L-serine. 353-356 (EISS) is a binding site for ATP. Residue Ser-389 coordinates L-serine.

The protein belongs to the class-II aminoacyl-tRNA synthetase family. Type-1 seryl-tRNA synthetase subfamily. In terms of assembly, homodimer. The tRNA molecule binds across the dimer.

It localises to the cytoplasm. It catalyses the reaction tRNA(Ser) + L-serine + ATP = L-seryl-tRNA(Ser) + AMP + diphosphate + H(+). The catalysed reaction is tRNA(Sec) + L-serine + ATP = L-seryl-tRNA(Sec) + AMP + diphosphate + H(+). It functions in the pathway aminoacyl-tRNA biosynthesis; selenocysteinyl-tRNA(Sec) biosynthesis; L-seryl-tRNA(Sec) from L-serine and tRNA(Sec): step 1/1. Catalyzes the attachment of serine to tRNA(Ser). Is also able to aminoacylate tRNA(Sec) with serine, to form the misacylated tRNA L-seryl-tRNA(Sec), which will be further converted into selenocysteinyl-tRNA(Sec). The chain is Serine--tRNA ligase from Haemophilus influenzae (strain PittEE).